Reading from the N-terminus, the 401-residue chain is Multidrug resistance protein MdtH (401 aa).

A run of 11 helical transmembrane segments spans residues 13 to 33 (YFLL…FPLI), 34 to 54 (SIHF…ALGL), 78 to 95 (MIVT…FIAL), 99 to 116 (PWIL…GTLF), 139 to 159 (LLLM…SWLL), 165 to 185 (FVCW…ALFL), 214 to 234 (VLTL…FPII), 243 to 263 (AAVK…LYPI), 289 to 309 (FPVG…LFYL), 340 to 360 (LGLA…YDTG), and 365 to 385 (IPQL…YALH).

The protein belongs to the major facilitator superfamily. DHA1 family. MdtH (TC 2.A.1.2.21) subfamily.

Its subcellular location is the cell inner membrane. This Photorhabdus laumondii subsp. laumondii (strain DSM 15139 / CIP 105565 / TT01) (Photorhabdus luminescens subsp. laumondii) protein is Multidrug resistance protein MdtH.